The primary structure comprises 377 residues: Succinyl-diaminopimelate desuccinylase (377 aa).

His-66 provides a ligand contact to Zn(2+). Asp-68 is an active-site residue. Asp-99 is a Zn(2+) binding site. Glu-133 (proton acceptor) is an active-site residue. Zn(2+)-binding residues include Glu-134, Glu-163, and His-349.

Belongs to the peptidase M20A family. DapE subfamily. In terms of assembly, homodimer. It depends on Zn(2+) as a cofactor. Co(2+) is required as a cofactor.

It carries out the reaction N-succinyl-(2S,6S)-2,6-diaminopimelate + H2O = (2S,6S)-2,6-diaminopimelate + succinate. It functions in the pathway amino-acid biosynthesis; L-lysine biosynthesis via DAP pathway; LL-2,6-diaminopimelate from (S)-tetrahydrodipicolinate (succinylase route): step 3/3. In terms of biological role, catalyzes the hydrolysis of N-succinyl-L,L-diaminopimelic acid (SDAP), forming succinate and LL-2,6-diaminopimelate (DAP), an intermediate involved in the bacterial biosynthesis of lysine and meso-diaminopimelic acid, an essential component of bacterial cell walls. This is Succinyl-diaminopimelate desuccinylase from Legionella pneumophila (strain Paris).